Here is a 71-residue protein sequence, read N- to C-terminus: Large ribosomal subunit protein uL29 (71 aa).

Belongs to the universal ribosomal protein uL29 family.

In Rickettsia typhi (strain ATCC VR-144 / Wilmington), this protein is Large ribosomal subunit protein uL29.